The primary structure comprises 311 residues: tRNA-cytidine(32) 2-sulfurtransferase (311 aa).

The short motif at serine 47–serine 52 is the PP-loop motif element. [4Fe-4S] cluster-binding residues include cysteine 122, cysteine 125, and cysteine 213.

It belongs to the TtcA family. As to quaternary structure, homodimer. The cofactor is Mg(2+). It depends on [4Fe-4S] cluster as a cofactor.

It localises to the cytoplasm. The enzyme catalyses cytidine(32) in tRNA + S-sulfanyl-L-cysteinyl-[cysteine desulfurase] + AH2 + ATP = 2-thiocytidine(32) in tRNA + L-cysteinyl-[cysteine desulfurase] + A + AMP + diphosphate + H(+). Its pathway is tRNA modification. Its function is as follows. Catalyzes the ATP-dependent 2-thiolation of cytidine in position 32 of tRNA, to form 2-thiocytidine (s(2)C32). The sulfur atoms are provided by the cysteine/cysteine desulfurase (IscS) system. The chain is tRNA-cytidine(32) 2-sulfurtransferase from Salmonella dublin (strain CT_02021853).